The sequence spans 237 residues: MARQNFLGLVVSQGKMQKTVKVRVETKVFNKKINKELFHRRDYLVHDEGEISREGDLVRIEATRPLSKRKFFAIAEIIRNKGQQFALYESEAQLSVAKEEAQKAKEFLDKRSVRENKLNEKTTLLRDIRTIQDALSSGSTPKELLEIKQRYGIQDFSQETVRQLLQLDISGLEVNLEKQRSLIDRIQTRLSELLSNDLKCDQFLKDHGVEDPLTLKKNIKKNLLRKHVMMDMQQPSQ.

The protein belongs to the universal ribosomal protein uS17 family. In terms of assembly, component of the mitochondrial small ribosomal subunit (mt-SSU). Mature yeast 74S mitochondrial ribosomes consist of a small (37S) and a large (54S) subunit. The 37S small subunit contains a 15S ribosomal RNA (15S mt-rRNA) and 34 different proteins. The 54S large subunit contains a 21S rRNA (21S mt-rRNA) and 46 different proteins.

The protein localises to the mitochondrion. In terms of biological role, component of the mitochondrial ribosome (mitoribosome), a dedicated translation machinery responsible for the synthesis of mitochondrial genome-encoded proteins, including at least some of the essential transmembrane subunits of the mitochondrial respiratory chain. The mitoribosomes are attached to the mitochondrial inner membrane and translation products are cotranslationally integrated into the membrane. uS17m may have a meiosis-specific role as it accumulates during the middle stage of sporulation. This chain is Small ribosomal subunit protein uS17m (MRPS17), found in Saccharomyces cerevisiae (strain ATCC 204508 / S288c) (Baker's yeast).